Consider the following 143-residue polypeptide: Acetyltransferase plu1384 (143 aa).

In terms of domain architecture, N-acetyltransferase spans 1 to 138 (MEIRVFRQDD…ESVIFSKRLI (138 aa)).

The protein belongs to the acetyltransferase family. YpeA subfamily.

The sequence is that of Acetyltransferase plu1384 from Photorhabdus laumondii subsp. laumondii (strain DSM 15139 / CIP 105565 / TT01) (Photorhabdus luminescens subsp. laumondii).